Here is a 986-residue protein sequence, read N- to C-terminus: P3N-PIPO polyprotein (986 aa).

The 144-residue stretch at 141–284 (KLTEGQMNHL…QSILNSMIQF (144 aa)) folds into the Peptidase S30 domain. Catalysis depends on for P1 proteinase activity residues His192, Asp201, and Ser235. Residues 334–337 (KITC) carry the Involved in interaction with stylet and aphid transmission motif. Residues 592-594 (PTK) carry the Involved in virions binding and aphid transmission motif. In terms of domain architecture, Peptidase C6 spans 618–740 (LYIAKQGYCY…ESDIKHYRVG (123 aa)). Active-site for helper component proteinase activity residues include Cys626 and His699.

The protein belongs to the potyviridae P3N-PIPO polyprotein family. Interacts (via PIPO domain) with host PCaP1 protein; this interaction may help to anchor the movement complex to the plasma membrane from which the complex could move to the plasmodesmata. In terms of processing, potyviral RNA is expressed as two polyproteins which undergo post-translational proteolytic processing. Genome polyprotein is processed by NIa-pro, P1 and HC-pro proteinases resulting in the production of at least ten individual proteins. P3N-PIPO is cleaved by P1 and HC-pro proteinases resulting in the production of three individual proteins. The P1 proteinase and the HC-pro cleave only their respective C-termini autocatalytically.

The protein localises to the host cell junction. Its subcellular location is the host plasmodesma. The catalysed reaction is Hydrolyzes a Gly-|-Gly bond at its own C-terminus, commonly in the sequence -Tyr-Xaa-Val-Gly-|-Gly, in the processing of the potyviral polyprotein.. Its function is as follows. Required for aphid transmission and also has proteolytic activity. Only cleaves a Gly-Gly dipeptide at its own C-terminus. Interacts with virions and aphid stylets. Acts as a suppressor of RNA-mediated gene silencing, also known as post-transcriptional gene silencing (PTGS), a mechanism of plant viral defense that limits the accumulation of viral RNAs. May have RNA-binding activity. Functionally, allows efficient cell to cell propagation, by bypassing the host cell wall barrier. Transports viral genome to neighboring plant cells directly through plasmosdesmata, without any budding. The polypeptide is P3N-PIPO polyprotein (Potato virus Y (strain N) (PVY)).